A 204-amino-acid chain; its full sequence is Thymidylate kinase (204 aa).

11–18 contacts ATP; it reads GLDKSGKT.

The protein belongs to the thymidylate kinase family.

The catalysed reaction is dTMP + ATP = dTDP + ADP. Its pathway is pyrimidine metabolism; dTTP biosynthesis. This chain is Thymidylate kinase (TMK), found in Bos taurus (Bovine).